The chain runs to 362 residues: 3-dehydroquinate synthase (362 aa).

NAD(+) contacts are provided by residues 71–76, 105–109, 129–130, Lys142, Lys151, and 169–172; these read DGEQYK, GVVGD, TT, and CLKT. Zn(2+)-binding residues include Glu184, His247, and His264.

The protein belongs to the sugar phosphate cyclases superfamily. Dehydroquinate synthase family. The cofactor is Co(2+). Zn(2+) serves as cofactor. Requires NAD(+) as cofactor.

Its subcellular location is the cytoplasm. The catalysed reaction is 7-phospho-2-dehydro-3-deoxy-D-arabino-heptonate = 3-dehydroquinate + phosphate. It participates in metabolic intermediate biosynthesis; chorismate biosynthesis; chorismate from D-erythrose 4-phosphate and phosphoenolpyruvate: step 2/7. Functionally, catalyzes the conversion of 3-deoxy-D-arabino-heptulosonate 7-phosphate (DAHP) to dehydroquinate (DHQ). The sequence is that of 3-dehydroquinate synthase from Shigella boydii serotype 18 (strain CDC 3083-94 / BS512).